Consider the following 373-residue polypeptide: 3 beta-hydroxysteroid dehydrogenase/Delta 5--&gt;4-isomerase type 1 (373 aa).

NADP(+) contacts are provided by residues 10–15 (GAGGFL), Y155, and K159. The active-site Proton donor is the K159. Residues 288–308 (LALMYWIGFLLEVVSFLLSPV) traverse the membrane as a helical segment.

The protein belongs to the 3-beta-HSD family. As to expression, adrenal glands, testes and ovaries.

It localises to the endoplasmic reticulum membrane. The protein resides in the mitochondrion membrane. The catalysed reaction is a 3beta-hydroxy-Delta(5)-steroid + NAD(+) = a 3-oxo-Delta(5)-steroid + NADH + H(+). The enzyme catalyses pregnenolone + NAD(+) = pregn-5-ene-3,20-dione + NADH + H(+). It catalyses the reaction 3beta-hydroxyandrost-5-en-17-one + NAD(+) = androst-5-ene-3,17-dione + NADH + H(+). It carries out the reaction androst-5-en-3beta,17beta-diol + NAD(+) = 17beta-hydroxy-androst-5-en-3-one + NADH + H(+). The catalysed reaction is a 3beta-hydroxysteroid + NADP(+) = a 3-oxosteroid + NADPH + H(+). The enzyme catalyses 5alpha-androstane-3beta,17beta-diol + NADP(+) = 17beta-hydroxy-5alpha-androstan-3-one + NADPH + H(+). It catalyses the reaction 3beta-hydroxy-5alpha-androstan-17-one + NADP(+) = 5alpha-androstan-3,17-dione + NADPH + H(+). It carries out the reaction a 3-oxo-Delta(5)-steroid = a 3-oxo-Delta(4)-steroid. The catalysed reaction is pregn-5-ene-3,20-dione = progesterone. The enzyme catalyses androst-5-ene-3,17-dione = androst-4-ene-3,17-dione. It catalyses the reaction 17beta-hydroxy-androst-5-en-3-one = testosterone. It carries out the reaction 5alpha-androstane-3beta,17beta-diol + NAD(+) = 17beta-hydroxy-5alpha-androstan-3-one + NADH + H(+). The protein operates within steroid hormone biosynthesis. It functions in the pathway steroid metabolism. A bifunctional enzyme responsible for the oxidation and isomerization of 3beta-hydroxy-Delta(5)-steroid precursors to 3-oxo-Delta(4)-steroids, an essential step in steroid hormone biosynthesis. Specifically catalyzes the conversion of pregnenolone to progesterone, 17alpha-hydroxypregnenolone to 17alpha-hydroxyprogesterone, dehydroepiandrosterone (DHEA) to 4-androstenedione and androstenediol to testosterone. Additionally, catalyzes the interconversion between 3beta-hydroxy and 3-oxo-5alpha-androstane steroids controlling the bioavalability of the active forms. Specifically converts dihydrotestosterone to its inactive form 5alpha-androstanediol, that does not bind androgen receptor/AR. Also converts androstanedione, a precursor of testosterone and estrone, to epiandrosterone. Expected to use NAD(+) as preferred electron donor for the 3beta-hydroxy-steroid dehydrogenase activity and NADPH for the 3-ketosteroid reductase activity. In Macaca mulatta (Rhesus macaque), this protein is 3 beta-hydroxysteroid dehydrogenase/Delta 5--&gt;4-isomerase type 1 (HSD3B1).